A 125-amino-acid chain; its full sequence is Somatostatin-2 (125 aa).

The N-terminal stretch at 1-24 (MQCIRCPAILALLALVLCGPSVSS) is a signal peptide. Gln-25 is modified (pyrrolidone carboxylic acid). A propeptide spanning residues 25 to 97 (QLDREQSDNQ…ATGGRMNLER (73 aa)) is cleaved from the precursor. The tract at residues 82-107 (AEDASMATGGRMNLERSVDSTNNLPP) is disordered. The cysteines at positions 114 and 125 are disulfide-linked. A 5-hydroxylysine modification is found at Lys-120.

Belongs to the somatostatin family.

The protein localises to the secreted. Its function is as follows. Somatostatin inhibits the release of somatotropin. The sequence is that of Somatostatin-2 (sst2) from Lophius americanus (American angler).